Reading from the N-terminus, the 185-residue chain is Large ribosomal subunit protein uL5 (185 aa).

This sequence belongs to the universal ribosomal protein uL5 family. As to quaternary structure, part of the 50S ribosomal subunit; part of the 5S rRNA/L5/L18/L25 subcomplex. Contacts the 5S rRNA and the P site tRNA. Forms a bridge to the 30S subunit in the 70S ribosome.

Functionally, this is one of the proteins that bind and probably mediate the attachment of the 5S RNA into the large ribosomal subunit, where it forms part of the central protuberance. In the 70S ribosome it contacts protein S13 of the 30S subunit (bridge B1b), connecting the 2 subunits; this bridge is implicated in subunit movement. Contacts the P site tRNA; the 5S rRNA and some of its associated proteins might help stabilize positioning of ribosome-bound tRNAs. The sequence is that of Large ribosomal subunit protein uL5 from Nitrobacter winogradskyi (strain ATCC 25391 / DSM 10237 / CIP 104748 / NCIMB 11846 / Nb-255).